The sequence spans 548 residues: ATP synthase subunit alpha (548 aa).

G172–T179 is a binding site for ATP. The interval Q510–K548 is disordered. Low complexity predominate over residues S514–A531.

It belongs to the ATPase alpha/beta chains family. As to quaternary structure, F-type ATPases have 2 components, CF(1) - the catalytic core - and CF(0) - the membrane proton channel. CF(1) has five subunits: alpha(3), beta(3), gamma(1), delta(1), epsilon(1). CF(0) has three main subunits: a(1), b(2) and c(9-12). The alpha and beta chains form an alternating ring which encloses part of the gamma chain. CF(1) is attached to CF(0) by a central stalk formed by the gamma and epsilon chains, while a peripheral stalk is formed by the delta and b chains.

The protein resides in the cell membrane. The catalysed reaction is ATP + H2O + 4 H(+)(in) = ADP + phosphate + 5 H(+)(out). Its function is as follows. Produces ATP from ADP in the presence of a proton gradient across the membrane. The alpha chain is a regulatory subunit. The protein is ATP synthase subunit alpha of Saccharopolyspora erythraea (strain ATCC 11635 / DSM 40517 / JCM 4748 / NBRC 13426 / NCIMB 8594 / NRRL 2338).